A 323-amino-acid polypeptide reads, in one-letter code: Beta-ketoacyl-[acyl-carrier-protein] synthase III (323 aa).

Catalysis depends on residues C113 and H250. The interval 251-255 (QANKR) is ACP-binding. Residue N280 is part of the active site.

Belongs to the thiolase-like superfamily. FabH family. As to quaternary structure, homodimer.

Its subcellular location is the cytoplasm. It carries out the reaction malonyl-[ACP] + acetyl-CoA + H(+) = 3-oxobutanoyl-[ACP] + CO2 + CoA. It functions in the pathway lipid metabolism; fatty acid biosynthesis. Its function is as follows. Catalyzes the condensation reaction of fatty acid synthesis by the addition to an acyl acceptor of two carbons from malonyl-ACP. Catalyzes the first condensation reaction which initiates fatty acid synthesis and may therefore play a role in governing the total rate of fatty acid production. Possesses both acetoacetyl-ACP synthase and acetyl transacylase activities. Its substrate specificity determines the biosynthesis of branched-chain and/or straight-chain of fatty acids. This chain is Beta-ketoacyl-[acyl-carrier-protein] synthase III, found in Mesorhizobium japonicum (strain LMG 29417 / CECT 9101 / MAFF 303099) (Mesorhizobium loti (strain MAFF 303099)).